A 211-amino-acid polypeptide reads, in one-letter code: BAG family molecular chaperone regulator 2 (211 aa).

The residue at position 2 (Ala-2) is an N-acetylalanine. 3 positions are modified to phosphoserine: Ser-20, Ser-31, and Ser-73. Residues 20–61 adopt a coiled-coil conformation; sequence SMADRSSRLLESLDQLELRVEALREAATAVEQEKEVLLEMIH. The BAG domain maps to 109–189; that stretch reads SLKHATRIID…NIENADKAIK (81 aa).

In terms of assembly, binds to the ATPase domain of HSP/HSC70 chaperones. May interact with NWD1. Interacts with HSPA1A (via NBD), HSPA1B (via NBD) and HSPA8. May interact with DNJC9; the interaction seems to be histone-dependent.

Co-chaperone for HSP70 and HSC70 chaperone proteins. Acts as a nucleotide-exchange factor (NEF) promoting the release of ADP from the HSP70 and HSC70 proteins thereby triggering client/substrate protein release. The protein is BAG family molecular chaperone regulator 2 of Bos taurus (Bovine).